The chain runs to 76 residues: Esculentin-2-ALa (76 aa).

The signal sequence occupies residues 1 to 22 (MFTLKKSMLLLFFLGTISLSLC). A propeptide spanning residues 23–39 (EEERNADEDDGEKEVKR) is cleaved from the precursor. An intrachain disulfide couples C70 to C76.

Expressed by the skin glands.

Its subcellular location is the secreted. Its function is as follows. Antimicrobial peptide with activity against Gram-positive and Gram-negative bacteria and against fungi. Has been tested against S.aureus (MIC=2.5 ug/mL), B.pumilus (MIC=2.5 ug/mL), B.cereus (MIC=7.5 ug/mL), E.coli (MIC=12.5 ug/mL), B.dysenteriae (MIC=7.5 ug/mL), A.cacoaceticus (MIC=25.0 ug/mL), P.aeruginosa (MIC=50.0 ug/mL) and C.albicans (MIC=2.5 ug/mL). Also shows a weak hemolytic activity. The sequence is that of Esculentin-2-ALa from Amolops loloensis (Lolokou Sucker Frog).